The sequence spans 362 residues: MDRPAVSGPMDLPIMHDSDRYELVKDIGSGNFGVARLMRDKQSNELVAVKYIERGEKIDENVKREIINHRSLRHPNIVRFKEVILTPTHLAIVMEYASGGELFERICNAGRFSEDEARFFFQQLISGVSYCHAMQVCHRDLKLENTLLDGSPAPRLKICDFGYSKSSVLHSQPKSTVGTPAYIAPEVLLKKEYDGKVADVWSCGVTLYVMLVGAYPFEDPEEPKNFRKTIHRILNVQYAIPDYVHISPECRHLISRIFVADPAKRISIPEIRNHEWFLKNLPADLMNDNTMTTQFDESDQPGQSIEEIMQIIAEATVPPAGTQNLNHYLTGSLDIDDDMEEDLESDLDDLDIDSSGEIVYAM.

Residues serine 7, serine 18, serine 29, and serine 43 each carry the phosphoserine; by autocatalysis modification. Residues 21–277 (YELVKDIGSG…IPEIRNHEWF (257 aa)) form the Protein kinase domain. Residue 27–35 (IGSGNFGVA) participates in ATP binding. Residue lysine 50 coordinates ATP. Aspartate 140 acts as the Proton acceptor in catalysis. An activation loop region spans residues 160–186 (DFGYSKSSVLHSQPKSTVGTPAYIAPE). The residue at position 175 (serine 175) is a Phosphoserine. The tract at residues 283 to 318 (ADLMNDNTMTTQFDESDQPGQSIEEIMQIIAEATVP) is domain I; osmotic stress response, required for the kinase activity. Positions 319–362 (PAGTQNLNHYLTGSLDIDDDMEEDLESDLDDLDIDSSGEIVYAM) are domain II; ABA response and ABI1 binding.

It belongs to the protein kinase superfamily. Ser/Thr protein kinase family. As to quaternary structure, interacts with ABI1, PP2CA and SLAC1. Interacts with B'ALPHA, B'BETA, B'DELTA, PP2AA2, PP2AA3, PP2A1 and PP2A2. Associates with MAPKKK18 within the nucleus. Interacts with I-2, TOPP1 and TOPP2. Interacts with ABI2. In terms of processing, autophosphorylation on residues Ser-7, Ser-18, Ser-29, Ser-43, Ser-175 and/or Thr-176. Only the phosphorylation of Ser-175 is crucial for the kinase activity. The phosphorylation of Ser-43 may repress the ABA signaling pathway in absence of ABA. In terms of tissue distribution, expressed in seedlings, leaves, flowers, stems, and roots, but restricted to guard cells and vascular tissue.

It is found in the nucleus. The catalysed reaction is L-seryl-[protein] + ATP = O-phospho-L-seryl-[protein] + ADP + H(+). It catalyses the reaction L-threonyl-[protein] + ATP = O-phospho-L-threonyl-[protein] + ADP + H(+). Kinase activity enhanced by ABA and low humidity. Repressed by PP2CA independently of its phosphatase activity. Probably inactivated by ABI1. Repressed by TOPP1. Negatively regulated by ABI2. Activator of the abscisic acid (ABA) signaling pathway that regulates numerous ABA responses, such as stomata closure in response to drought, darkness, high CO(2), plant pathogens, or decreases in atmospheric relative humidity (RH). Involved in the resistance to drought by avoiding water loss. Required for the stomata closure mediated by pathogen-associated molecular pattern (PAMPs) (e.g. flg22 and LPS) of pathogenic bacteria such as P.syringae pv. tomato (Pst) and E.coli O157:H7. As a plant defense process, stomata are closed transiently in order to limit invaders, but actively reopened by bacteria after a few hours; virulent strains (e.g. Pst DC3000) are more efficient than avirulent strains (e.g. Pst DC3000 AvrRpt2) in reopening stomata. Mediates the phosphorylation and activation of the S-type anion efflux channel SLAC1, and thus promotes stomata closure. Essential for stomatal closure in response to reactive oxygen species (ROS). Promotes MAPKKK18 activity upon abscisic acid (ABA) treatment. The polypeptide is Serine/threonine-protein kinase SRK2E (Arabidopsis thaliana (Mouse-ear cress)).